Here is a 595-residue protein sequence, read N- to C-terminus: Miltiradiene synthase KSL1, chloroplastic (595 aa).

The transit peptide at methionine 1–cysteine 47 directs the protein to the chloroplast. Residues aspartate 334, aspartate 338, asparagine 478, and glutamate 486 each coordinate Mg(2+). A DDXXD motif motif is present at residues aspartate 334 to aspartate 338.

This sequence belongs to the terpene synthase family. It depends on Mg(2+) as a cofactor.

The protein resides in the plastid. The protein localises to the chloroplast. The enzyme catalyses (+)-copalyl diphosphate = miltiradiene + diphosphate. It participates in secondary metabolite biosynthesis; terpenoid biosynthesis. Functionally, involved in tanshinone biosynthesis in hairy roots. Catalyzes the conversion of copalyl diphosphate (CPP) to miltiradiene. This chain is Miltiradiene synthase KSL1, chloroplastic, found in Salvia miltiorrhiza (Chinese sage).